Consider the following 323-residue polypeptide: UDP-N-acetylenolpyruvoylglucosamine reductase (323 aa).

The FAD-binding PCMH-type domain maps to 52–217; it reads KSGGAADWLF…VSARLQGEPG (166 aa). Residue Arg197 is part of the active site. Residues 234–253 are disordered; sequence EQSQPVRTKTGGSTFKNPPG. Polar residues predominate over residues 235 to 249; sequence QSQPVRTKTGGSTFK. Ser246 (proton donor) is an active-site residue. Glu316 is an active-site residue.

The protein belongs to the MurB family. The cofactor is FAD.

The protein localises to the cytoplasm. The enzyme catalyses UDP-N-acetyl-alpha-D-muramate + NADP(+) = UDP-N-acetyl-3-O-(1-carboxyvinyl)-alpha-D-glucosamine + NADPH + H(+). It functions in the pathway cell wall biogenesis; peptidoglycan biosynthesis. In terms of biological role, cell wall formation. This Erythrobacter litoralis (strain HTCC2594) protein is UDP-N-acetylenolpyruvoylglucosamine reductase.